A 614-amino-acid polypeptide reads, in one-letter code: Probable Xaa-Pro aminopeptidase P (614 aa).

Residues aspartate 409, aspartate 420, glutamate 518, and glutamate 532 each coordinate Mn(2+).

The protein belongs to the peptidase M24B family. Mn(2+) serves as cofactor.

The catalysed reaction is Release of any N-terminal amino acid, including proline, that is linked to proline, even from a dipeptide or tripeptide.. Its function is as follows. Catalyzes the removal of a penultimate prolyl residue from the N-termini of peptides. In Aspergillus niger (strain ATCC MYA-4892 / CBS 513.88 / FGSC A1513), this protein is Probable Xaa-Pro aminopeptidase P (ampp).